We begin with the raw amino-acid sequence, 103 residues long: Small ribosomal subunit protein uS10 (103 aa).

The protein belongs to the universal ribosomal protein uS10 family. As to quaternary structure, part of the 30S ribosomal subunit.

In terms of biological role, involved in the binding of tRNA to the ribosomes. The chain is Small ribosomal subunit protein uS10 from Buchnera aphidicola subsp. Cinara cedri (strain Cc).